A 431-amino-acid polypeptide reads, in one-letter code: Enolase (431 aa).

Q166 provides a ligand contact to (2R)-2-phosphoglycerate. E208 acts as the Proton donor in catalysis. Residues D245, E288, and D315 each contribute to the Mg(2+) site. (2R)-2-phosphoglycerate contacts are provided by K340, R369, S370, and K391. Residue K340 is the Proton acceptor of the active site.

This sequence belongs to the enolase family. Requires Mg(2+) as cofactor.

It localises to the cytoplasm. It is found in the secreted. The protein localises to the cell surface. It carries out the reaction (2R)-2-phosphoglycerate = phosphoenolpyruvate + H2O. The protein operates within carbohydrate degradation; glycolysis; pyruvate from D-glyceraldehyde 3-phosphate: step 4/5. Catalyzes the reversible conversion of 2-phosphoglycerate (2-PG) into phosphoenolpyruvate (PEP). It is essential for the degradation of carbohydrates via glycolysis. This chain is Enolase, found in Clostridium perfringens (strain ATCC 13124 / DSM 756 / JCM 1290 / NCIMB 6125 / NCTC 8237 / Type A).